We begin with the raw amino-acid sequence, 228 residues long: Superoxide dismutase [Mn] (228 aa).

A signal peptide spans 1-23; that stretch reads MTRSLKTTLILLASSVISMSALA. Mn(2+) is bound by residues H49, H100, D188, and H192.

This sequence belongs to the iron/manganese superoxide dismutase family. It depends on Mn(2+) as a cofactor.

It localises to the periplasm. It carries out the reaction 2 superoxide + 2 H(+) = H2O2 + O2. Destroys superoxide anion radicals which are normally produced within the cells and which are toxic to biological systems. This chain is Superoxide dismutase [Mn] (sodA), found in Acinetobacter baylyi (strain ATCC 33305 / BD413 / ADP1).